Consider the following 153-residue polypeptide: UPAR/Ly6 domain-containing protein cold (153 aa).

Positions 1–25 (MKSWEIAVVLVAAVYLCSQVNFVAG) are cleaved as a signal peptide. Topologically, residues 26-130 (LECYVCSNQT…FVISGAPSRQ (105 aa)) are extracellular. Cystine bridges form between Cys28–Cys55, Cys31–Cys41, Cys48–Cys81, Cys87–Cys112, Cys99–Cys109, and Cys113–Cys118. Asn33 carries N-linked (GlcNAc...) asparagine glycosylation. Ser124 carries GPI-anchor amidated serine lipidation. A propeptide spans 125–153 (GAPSRQGYGVCLTLLTALLGLGSWLIPRS) (removed in mature form). The chain crosses the membrane as a helical span at residues 131–151 (GYGVCLTLLTALLGLGSWLIP). Residues 152 to 153 (RS) are Cytoplasmic-facing.

Belongs to the snake toxin-like superfamily. GPI-anchored. Expressed in all tissues that form septate junctions, including hindgut, trachea, epidermis and dorsal pouch. Expressed in subperineurial glial cells that form the hemolymph-brain barrier of the central nervous system.

It is found in the endosome membrane. The protein resides in the endoplasmic reticulum membrane. It localises to the cell membrane. Its subcellular location is the cell junction. The protein localises to the septate junction. Functionally, required for septate junction assembly, possibly by organizing the preassembly and transport of septate junction proteins such as dlg1/disks large 1 and Nrx-IV/Neurexin-IV. Involved in paracellular barrier functions of trachea, hindgut and salivary gland mediated by epithelial cell septate junctions. Involved in paracellular barrier functions of the hemolymph-brain barrier (insect blood-brain barrier) mediated by glial cell septate junctions. Required for maintenance of septate junctions in imaginal disk epithelial cells. Involved in the epithelial cell wound-healing response. Directly or indirectly mediates cell-cell adhesion during septate junction formation. This chain is UPAR/Ly6 domain-containing protein cold, found in Drosophila melanogaster (Fruit fly).